Consider the following 263-residue polypeptide: uncharacterized protein (263 aa).

Residues 198–224 (KRSSDSFVSLKPGEDEHSPLEISTCGN) form a disordered region.

This is an uncharacterized protein from Saccharomyces cerevisiae (strain ATCC 204508 / S288c) (Baker's yeast).